A 118-amino-acid polypeptide reads, in one-letter code: UPF0342 protein Hore_03100 (118 aa).

It belongs to the UPF0342 family.

This Halothermothrix orenii (strain H 168 / OCM 544 / DSM 9562) protein is UPF0342 protein Hore_03100.